We begin with the raw amino-acid sequence, 701 residues long: Elongation factor G (701 aa).

The region spanning 11-287 (TKVRNIGIMA…AVIDYLPSPL (277 aa)) is the tr-type G domain. GTP contacts are provided by residues 20–27 (AHIDAGKT), 84–88 (DTPGH), and 138–141 (NKMD).

It belongs to the TRAFAC class translation factor GTPase superfamily. Classic translation factor GTPase family. EF-G/EF-2 subfamily.

Its subcellular location is the cytoplasm. Functionally, catalyzes the GTP-dependent ribosomal translocation step during translation elongation. During this step, the ribosome changes from the pre-translocational (PRE) to the post-translocational (POST) state as the newly formed A-site-bound peptidyl-tRNA and P-site-bound deacylated tRNA move to the P and E sites, respectively. Catalyzes the coordinated movement of the two tRNA molecules, the mRNA and conformational changes in the ribosome. This chain is Elongation factor G, found in Mycobacterium avium (strain 104).